Reading from the N-terminus, the 1095-residue chain is Putative patatin-like phospholipase domain-containing protein M110.7 (1095 aa).

A helical membrane pass occupies residues 9–29 (LLLIFENILELCMCITLVILI). The interval 75-113 (HKKRSSKEEMTPDKKRDSSEKISKQPPRELFEPNEQEQV) is disordered. A compositionally biased stretch (basic and acidic residues) spans 80 to 105 (SKEEMTPDKKRDSSEKISKQPPRELF). A nucleoside 3',5'-cyclic phosphate is bound by residues 144 to 237 (VETL…LTSF), 327 to 416 (RKYE…IQFL), and 450 to 509 (IETG…TVMA). The PNPLA domain maps to 768–935 (IVFGGGGARG…VNNLPADIMR (168 aa)). The GXGXXG motif lies at 772–777 (GGGARG). The GXSXG signature appears at 799-803 (GTSIG). Ser-801 (nucleophile) is an active-site residue. The active-site Proton acceptor is Asp-922. The DGA/G signature appears at 922 to 924 (DGA).

This sequence belongs to the NTE family.

Its subcellular location is the membrane. The protein is Putative patatin-like phospholipase domain-containing protein M110.7 of Caenorhabditis elegans.